The following is a 119-amino-acid chain: Large ribosomal subunit protein bL20c (119 aa).

This sequence belongs to the bacterial ribosomal protein bL20 family.

Its subcellular location is the plastid. The protein resides in the chloroplast. Its function is as follows. Binds directly to 23S ribosomal RNA and is necessary for the in vitro assembly process of the 50S ribosomal subunit. It is not involved in the protein synthesizing functions of that subunit. This is Large ribosomal subunit protein bL20c from Saccharum hybrid (Sugarcane).